The sequence spans 473 residues: Crt homolog 1 (473 aa).

Residues 1-49 (MTNNDKEKQPLLSSINNEDDNGATINIVEPVPWYSNIPQKIKNSMSKET) are Cytoplasmic-facing. Residues 50–70 (ITILIYVVLYVTSGVINSVLL) traverse the membrane as a helical segment. The Vacuolar portion of the chain corresponds to 71–80 (KKVMNKFTNY). A helical membrane pass occupies residues 81–101 (AFFLSQLTNFGYVPIFGAVTA). The Cytoplasmic portion of the chain corresponds to 102–121 (YKIFFTKDIPQETRDFPTRK). The chain crosses the membrane as a helical span at residues 122 to 142 (FAIMGALDAITGFFVVIGGVS). The Vacuolar portion of the chain corresponds to 143–146 (TSGP). The chain crosses the membrane as a helical span at residues 147–167 (LQQLLNQAIIPFTMIASFIFL). At 168 to 175 (KERYSLIQ) the chain is on the cytoplasmic side. A helical membrane pass occupies residues 176–196 (LGGALVIIGGVVTSLIPSLLG). At 197-207 (GSSGGNKPFWN) the chain is on the vacuolar side. Residues 208–228 (FFYLLSVIPGALSNVYKDIGF) traverse the membrane as a helical segment. Topologically, residues 229-248 (QAVADMDVWYLQYWDSLYQS) are cytoplasmic. A helical membrane pass occupies residues 249 to 269 (IFGLFLFPVNNWLPPPATVKF). Residues 270–322 (EQILPFMKEGAECLAGINSIIPSYINGTSSFTATSCTYAPDATITCDDCHNAW) are Vacuolar-facing. N-linked (GlcNAc...) asparagine glycosylation is present at Asn-295. The chain crosses the membrane as a helical span at residues 323–343 (IVIILYMTINIIYNIFILLVL). Residues 344–352 (KHAGATVYS) lie on the Cytoplasmic side of the membrane. A helical membrane pass occupies residues 353-373 (IANTLRLPLTNIVFSIHFIMG). A topological domain (vacuolar) is located at residue Ser-374. Residues 375–395 (AVSPFSGLSVAGLVIILVGLG) traverse the membrane as a helical segment. The Cytoplasmic portion of the chain corresponds to 396-473 (GYRVGSMIKQ…AANNNNYGDA (78 aa)).

This sequence belongs to the CRT-like transporter family.

It is found in the vacuole membrane. In terms of biological role, nutrient transporter. Involved in maintaining the osmotic homeostasis of the digestive vacuole. In Dictyostelium discoideum (Social amoeba), this protein is Crt homolog 1 (crtp1).